The following is a 541-amino-acid chain: Phosphoenolpyruvate carboxykinase (ATP) (541 aa).

Residues Arg67, Tyr207, and Lys213 each coordinate substrate. Residues Lys213, His232, and 248 to 256 (GLSGTGKTT) contribute to the ATP site. Mn(2+)-binding residues include Lys213 and His232. Asp269 serves as a coordination point for Mn(2+). ATP is bound by residues Glu297, Arg333, 449-450 (RI), and Thr455. Arg333 contributes to the substrate binding site.

The protein belongs to the phosphoenolpyruvate carboxykinase (ATP) family. In terms of assembly, monomer. Requires Mn(2+) as cofactor.

The protein localises to the cytoplasm. It carries out the reaction oxaloacetate + ATP = phosphoenolpyruvate + ADP + CO2. It participates in carbohydrate biosynthesis; gluconeogenesis. Involved in the gluconeogenesis. Catalyzes the conversion of oxaloacetate (OAA) to phosphoenolpyruvate (PEP) through direct phosphoryl transfer between the nucleoside triphosphate and OAA. The polypeptide is Phosphoenolpyruvate carboxykinase (ATP) (Vibrio atlanticus (strain LGP32) (Vibrio splendidus (strain Mel32))).